The following is a 406-amino-acid chain: Paracaspase (406 aa).

Positions 193–374 (IGNSKYSQHR…TERKNNNIST (182 aa)) are caspase-like. Residues His266 and Cys311 contribute to the active site.

It belongs to the peptidase C14B family.

In terms of biological role, not required for DIF-induced autophagic cell death and necrotic cell death. This is Paracaspase (pcp) from Dictyostelium discoideum (Social amoeba).